The sequence spans 680 residues: tRNA 5-methylaminomethyl-2-thiouridine biosynthesis bifunctional protein MnmC (680 aa).

The interval 1–245 (MSHPPIQTAT…KREMLTGILP (245 aa)) is tRNA (mnm(5)s(2)U34)-methyltransferase. Positions 270 to 680 (IGGGIVSALT…PVQQRVSVLS (411 aa)) are FAD-dependent cmnm(5)s(2)U34 oxidoreductase.

This sequence in the N-terminal section; belongs to the methyltransferase superfamily. tRNA (mnm(5)s(2)U34)-methyltransferase family. In the C-terminal section; belongs to the DAO family. Requires FAD as cofactor.

It localises to the cytoplasm. It catalyses the reaction 5-aminomethyl-2-thiouridine(34) in tRNA + S-adenosyl-L-methionine = 5-methylaminomethyl-2-thiouridine(34) in tRNA + S-adenosyl-L-homocysteine + H(+). In terms of biological role, catalyzes the last two steps in the biosynthesis of 5-methylaminomethyl-2-thiouridine (mnm(5)s(2)U) at the wobble position (U34) in tRNA. Catalyzes the FAD-dependent demodification of cmnm(5)s(2)U34 to nm(5)s(2)U34, followed by the transfer of a methyl group from S-adenosyl-L-methionine to nm(5)s(2)U34, to form mnm(5)s(2)U34. This Yersinia enterocolitica serotype O:8 / biotype 1B (strain NCTC 13174 / 8081) protein is tRNA 5-methylaminomethyl-2-thiouridine biosynthesis bifunctional protein MnmC.